Consider the following 363-residue polypeptide: Uroporphyrinogen decarboxylase (363 aa).

Substrate-binding positions include 36–40 (RQAGR), D85, Y160, S215, and H339.

This sequence belongs to the uroporphyrinogen decarboxylase family. In terms of assembly, homodimer.

It localises to the cytoplasm. The catalysed reaction is uroporphyrinogen III + 4 H(+) = coproporphyrinogen III + 4 CO2. It participates in porphyrin-containing compound metabolism; protoporphyrin-IX biosynthesis; coproporphyrinogen-III from 5-aminolevulinate: step 4/4. Catalyzes the decarboxylation of four acetate groups of uroporphyrinogen-III to yield coproporphyrinogen-III. The protein is Uroporphyrinogen decarboxylase of Saccharopolyspora erythraea (strain ATCC 11635 / DSM 40517 / JCM 4748 / NBRC 13426 / NCIMB 8594 / NRRL 2338).